A 192-amino-acid chain; its full sequence is NADH-ubiquinone oxidoreductase subunit 9 (192 aa).

It belongs to the complex I 30 kDa subunit family. Complex I is composed of about 30 different subunits.

The protein localises to the mitochondrion inner membrane. The catalysed reaction is a ubiquinone + NADH + 5 H(+)(in) = a ubiquinol + NAD(+) + 4 H(+)(out). Functionally, core subunit of the mitochondrial membrane respiratory chain NADH dehydrogenase (Complex I) that is believed to belong to the minimal assembly required for catalysis. Complex I functions in the transfer of electrons from NADH to the respiratory chain. The immediate electron acceptor for the enzyme is believed to be ubiquinone. The polypeptide is NADH-ubiquinone oxidoreductase subunit 9 (NAD9) (Prototheca wickerhamii).